We begin with the raw amino-acid sequence, 468 residues long: Phosphomethylpyrimidine synthase (468 aa).

Residues Asn-80, Met-109, Tyr-138, His-173, 193 to 195 (SRG), 234 to 237 (DGLR), and Glu-273 each bind substrate. His-277 is a binding site for Zn(2+). Substrate is bound at residue Tyr-300. His-341 is a Zn(2+) binding site. [4Fe-4S] cluster-binding residues include Cys-421, Cys-424, and Cys-429.

It belongs to the ThiC family. Homodimer. Requires [4Fe-4S] cluster as cofactor.

The enzyme catalyses 5-amino-1-(5-phospho-beta-D-ribosyl)imidazole + S-adenosyl-L-methionine = 4-amino-2-methyl-5-(phosphooxymethyl)pyrimidine + CO + 5'-deoxyadenosine + formate + L-methionine + 3 H(+). It participates in cofactor biosynthesis; thiamine diphosphate biosynthesis. Its function is as follows. Catalyzes the synthesis of the hydroxymethylpyrimidine phosphate (HMP-P) moiety of thiamine from aminoimidazole ribotide (AIR) in a radical S-adenosyl-L-methionine (SAM)-dependent reaction. This chain is Phosphomethylpyrimidine synthase, found in Anaeromyxobacter sp. (strain Fw109-5).